The sequence spans 82 residues: uncharacterized protein (82 aa).

This is an uncharacterized protein from Human herpesvirus 6A (strain Uganda-1102) (HHV-6 variant A).